Reading from the N-terminus, the 723-residue chain is Polyribonucleotide nucleotidyltransferase (723 aa).

Positions 488 and 494 each coordinate Mg(2+). The KH domain maps to 555-614 (PKIITLNIKPEKIKDVIGPGGKQINAIIDETGVKIDIEQDGTVYIASQDQAMNRKAIAII). The S1 motif domain maps to 624-692 (GEVYTGKVRR…QQGRVNLSRK (69 aa)). Residues 692–723 (KALLEKKEQPEGDKKPQAEKKFYPKTKKPESK) are disordered. Over residues 693–723 (ALLEKKEQPEGDKKPQAEKKFYPKTKKPESK) the composition is skewed to basic and acidic residues.

It belongs to the polyribonucleotide nucleotidyltransferase family. Mg(2+) is required as a cofactor.

The protein resides in the cytoplasm. It carries out the reaction RNA(n+1) + phosphate = RNA(n) + a ribonucleoside 5'-diphosphate. Functionally, involved in mRNA degradation. Catalyzes the phosphorolysis of single-stranded polyribonucleotides processively in the 3'- to 5'-direction. This Listeria monocytogenes serovar 1/2a (strain ATCC BAA-679 / EGD-e) protein is Polyribonucleotide nucleotidyltransferase.